The primary structure comprises 879 residues: Valine--tRNA ligase (879 aa).

The short motif at Pro-45–His-55 is the 'HIGH' region element. The 'KMSKS' region signature appears at Lys-521–Ser-525. Lys-524 is an ATP binding site. A coiled-coil region spans residues Leu-806–Lys-879.

The protein belongs to the class-I aminoacyl-tRNA synthetase family. ValS type 1 subfamily. In terms of assembly, monomer.

The protein localises to the cytoplasm. It carries out the reaction tRNA(Val) + L-valine + ATP = L-valyl-tRNA(Val) + AMP + diphosphate. In terms of biological role, catalyzes the attachment of valine to tRNA(Val). As ValRS can inadvertently accommodate and process structurally similar amino acids such as threonine, to avoid such errors, it has a 'posttransfer' editing activity that hydrolyzes mischarged Thr-tRNA(Val) in a tRNA-dependent manner. The polypeptide is Valine--tRNA ligase (Lactobacillus johnsonii (strain CNCM I-12250 / La1 / NCC 533)).